The chain runs to 450 residues: Succinate-semialdehyde dehydrogenase (450 aa).

An NADP(+)-binding site is contributed by 119 to 120 (WN). R128 contacts substrate. NADP(+)-binding positions include 143-146 (KPAK) and 197-198 (GS). The active-site Proton acceptor is E219. NADP(+) is bound at residue L220. Positions 247 and 253 each coordinate substrate. C253 (nucleophile) is an active-site residue. E350 provides a ligand contact to NADP(+). Substrate is bound at residue S410.

It belongs to the aldehyde dehydrogenase family. In terms of assembly, homodimer.

It catalyses the reaction succinate semialdehyde + NAD(+) + H2O = succinate + NADH + 2 H(+). It carries out the reaction succinate semialdehyde + NADP(+) + H2O = succinate + NADPH + 2 H(+). The protein operates within alkaloid degradation; nicotine degradation. Its function is as follows. Catalyzes the NAD(P)(+)-dependent oxidation of succinate semialdehyde to succinate, which may enter the citric acid cycle. Is involved in the catabolism of 4-methylaminobutanoate produced from nicotine. Acts preferentially with NADP(+) as cosubstrate but can also use NAD(+). To a lesser extent, is active also towards butyraldehyde (8.5% of the activity observed with succinate semialdehyde) and propionaldehyde (1.6% of the activity observed with succinate semialdehyde) as substrates. The chain is Succinate-semialdehyde dehydrogenase (sad) from Paenarthrobacter nicotinovorans (Arthrobacter nicotinovorans).